The chain runs to 230 residues: Cyclin-U2-2 (230 aa).

It belongs to the cyclin family. Cyclin U/P subfamily. In terms of assembly, interacts with CDKA-1. In terms of tissue distribution, expressed in roots and stems. Expressed in the shoot apex, leaf primordia and young leaves.

The chain is Cyclin-U2-2 (CYCU2-2) from Arabidopsis thaliana (Mouse-ear cress).